The sequence spans 111 residues: Cystatin (111 aa).

Residues 3-103 (GGLSPRDVTD…CRFEVWSRPW (101 aa)) enclose the Cystatin domain. The Secondary area of contact signature appears at 47-51 (QVVSG). Cysteines 65 and 81 form a disulfide.

The protein belongs to the cystatin family. Expressed by the venom gland.

The protein localises to the secreted. Its function is as follows. Inhibits various C1 cysteine proteases including cathepsin L, papain and cathepsin B. This protein has no toxic activity and its function in the venom is unknown. It may play a role as housekeeping or regulatory protein. The sequence is that of Cystatin from Bitis arietans (African puff adder).